We begin with the raw amino-acid sequence, 212 residues long: Cell division protein YtfB (212 aa).

Residues 34 to 50 (GIIIAAIVLVVGFLLPS) form a helical membrane-spanning segment. Residues 88–127 (NDPDQVAPVAPEPIQEGQPEEQPQTTQTQPFQPDSGIDNQ) form a disordered region. Positions 99–120 (EPIQEGQPEEQPQTTQTQPFQP) are enriched in low complexity. The interval 117–212 (PFQPDSGIDN…QPDGSFIRAR (96 aa)) is oapA.

This sequence belongs to the OapA family.

It is found in the cell inner membrane. In terms of biological role, cell division protein whose function is related to the generation of a transient cell wall structure. Function is linked to the late stages of cell division. In Escherichia coli (strain K12), this protein is Cell division protein YtfB (ytfB).